We begin with the raw amino-acid sequence, 243 residues long: DNA repair protein RecO (243 aa).

Belongs to the RecO family.

Functionally, involved in DNA repair and RecF pathway recombination. In Frankia casuarinae (strain DSM 45818 / CECT 9043 / HFP020203 / CcI3), this protein is DNA repair protein RecO.